The following is a 263-amino-acid chain: Phosphatidylserine decarboxylase proenzyme (263 aa).

Residues D90, H146, and S230 each act as charge relay system; for autoendoproteolytic cleavage activity in the active site. The Schiff-base intermediate with substrate; via pyruvic acid; for decarboxylase activity role is filled by S230. Pyruvic acid (Ser); by autocatalysis is present on S230.

It belongs to the phosphatidylserine decarboxylase family. PSD-B subfamily. Prokaryotic type I sub-subfamily. As to quaternary structure, heterodimer of a large membrane-associated beta subunit and a small pyruvoyl-containing alpha subunit. It depends on pyruvate as a cofactor. Is synthesized initially as an inactive proenzyme. Formation of the active enzyme involves a self-maturation process in which the active site pyruvoyl group is generated from an internal serine residue via an autocatalytic post-translational modification. Two non-identical subunits are generated from the proenzyme in this reaction, and the pyruvate is formed at the N-terminus of the alpha chain, which is derived from the carboxyl end of the proenzyme. The autoendoproteolytic cleavage occurs by a canonical serine protease mechanism, in which the side chain hydroxyl group of the serine supplies its oxygen atom to form the C-terminus of the beta chain, while the remainder of the serine residue undergoes an oxidative deamination to produce ammonia and the pyruvoyl prosthetic group on the alpha chain. During this reaction, the Ser that is part of the protease active site of the proenzyme becomes the pyruvoyl prosthetic group, which constitutes an essential element of the active site of the mature decarboxylase.

The protein localises to the cell membrane. It catalyses the reaction a 1,2-diacyl-sn-glycero-3-phospho-L-serine + H(+) = a 1,2-diacyl-sn-glycero-3-phosphoethanolamine + CO2. It functions in the pathway phospholipid metabolism; phosphatidylethanolamine biosynthesis; phosphatidylethanolamine from CDP-diacylglycerol: step 2/2. Functionally, catalyzes the formation of phosphatidylethanolamine (PtdEtn) from phosphatidylserine (PtdSer). This chain is Phosphatidylserine decarboxylase proenzyme, found in Bacillus subtilis (strain 168).